Consider the following 322-residue polypeptide: tRNA pseudouridine synthase B (322 aa).

Over residues 1 to 11 (MRPPRTTELDR) the composition is skewed to basic and acidic residues. The interval 1 to 22 (MRPPRTTELDRPMTTAASQRPR) is disordered. Asp65 acts as the Nucleophile in catalysis.

It belongs to the pseudouridine synthase TruB family. Type 1 subfamily.

The catalysed reaction is uridine(55) in tRNA = pseudouridine(55) in tRNA. In terms of biological role, responsible for synthesis of pseudouridine from uracil-55 in the psi GC loop of transfer RNAs. The polypeptide is tRNA pseudouridine synthase B (Burkholderia lata (strain ATCC 17760 / DSM 23089 / LMG 22485 / NCIMB 9086 / R18194 / 383)).